The primary structure comprises 630 residues: E3 ubiquitin-protein ligase TRIM41 (630 aa).

Residues 20–61 (CAICLDYFTDPVSIGCGHNFCRVCVTQLWGGEDEEDRDELDR) form an RING-type; degenerate zinc finger. Over residues 51–75 (EDEEDRDELDREEEEEEVGEEEEVE) the composition is skewed to acidic residues. Disordered regions lie at residues 51-97 (EDEE…GDME) and 148-176 (EDED…PPPA). A Phosphothreonine modification is found at Thr-85. The span at 148–166 (EDEDEEEEVLEEDEEEELD) shows a compositional bias: acidic residues. The segment at 222-263 (NEQGICPRHQEALKLFCEVDEEAICVVCRESRSHKQHSVVPL) adopts a B box-type zinc-finger fold. Zn(2+) contacts are provided by Cys-227, His-230, Cys-249, and His-255. Lys-256 participates in a covalent cross-link: Glycyl lysine isopeptide (Lys-Gly) (interchain with G-Cter in SUMO2). A coiled-coil region spans residues 281–374 (LRKHLEAVQK…AEAQERSQQG (94 aa)). Residues 413 to 630 (LTDAIVRKMS…SKGTRIKLCP (218 aa)) enclose the B30.2/SPRY domain. Position 447 is a phosphoserine (Ser-447). A disordered region spans residues 503–535 (ARESTHHKEKVGSGGSSVSSGDASSSRHHHRRR).

The protein belongs to the TRIM/RBCC family. In terms of assembly, interacts with PRKCA. Interacts with NOD2. Interacts with TRIM17; this interaction prevents TRIM41 activity on ZSCAN2. Post-translationally, auto-ubiquitinated.

Its subcellular location is the cytoplasm. It localises to the nucleus. The catalysed reaction is S-ubiquitinyl-[E2 ubiquitin-conjugating enzyme]-L-cysteine + [acceptor protein]-L-lysine = [E2 ubiquitin-conjugating enzyme]-L-cysteine + N(6)-ubiquitinyl-[acceptor protein]-L-lysine.. Its pathway is protein modification; protein ubiquitination. E3 ligase that plays essential roles in innate antiviral response. Directly binds to influenza A virus or vesicular stomatitis virus nucleoproteins and targets them for ubiquitination and proteasomal degradation, thereby limiting viral infections. Activates the innate antiviral response by catalyzing monoubiquitination of CGAS, thereby activating CGAS. Also involved in innate antiviral response by mediating 'Lys-63'-linked polyubiquitylation of BCL10 which in turn hubs NEMO for activation of NF-kappa-B and IRF3 pathways. Catalyzes the ubiquitin-mediated degradation of other substrates including protein kinase C, ZSCAN21 or TOP3B suggesting additional roles besides its function in immune response. The polypeptide is E3 ubiquitin-protein ligase TRIM41 (Mus musculus (Mouse)).